Here is a 472-residue protein sequence, read N- to C-terminus: Divalent metal cation transporter MntH (472 aa).

Transmembrane regions (helical) follow at residues 59–79 (LLAF…PGNW), 92–112 (MLLS…ALAA), 136–156 (LALW…EVIG), 167–187 (VPII…LLLM), 196–216 (AFVI…IVLA), 233–253 (VVAD…TVMP), 288–308 (LALM…AAVF), 325–345 (LLAP…ALLA), 377–397 (VLTR…YGEQ), 402–422 (LLLL…IPLL), and 439–459 (WLMV…VKLL).

The protein belongs to the NRAMP family.

The protein localises to the cell inner membrane. Its function is as follows. H(+)-stimulated, divalent metal cation uptake system. This is Divalent metal cation transporter MntH from Xylella fastidiosa (strain 9a5c).